A 250-amino-acid polypeptide reads, in one-letter code: DNA repair protein RecO (250 aa).

It belongs to the RecO family.

In terms of biological role, involved in DNA repair and RecF pathway recombination. The sequence is that of DNA repair protein RecO from Staphylococcus aureus (strain COL).